A 65-amino-acid chain; its full sequence is Large ribosomal subunit protein bL35 (65 aa).

It belongs to the bacterial ribosomal protein bL35 family.

This chain is Large ribosomal subunit protein bL35, found in Alkalilimnicola ehrlichii (strain ATCC BAA-1101 / DSM 17681 / MLHE-1).